Here is a 126-residue protein sequence, read N- to C-terminus: Probable prefoldin subunit 6 (126 aa).

It belongs to the prefoldin subunit beta family. In terms of assembly, heterohexamer of two PFD-alpha type and four PFD-beta type subunits. Expressed in embryonic blastomeres and gonads.

It is found in the cytoplasm. Its function is as follows. Binds specifically to cytosolic chaperonin (c-CPN) and transfers target proteins to it. Binds to nascent polypeptide chain and promotes folding in an environment in which there are many competing pathways for nonnative proteins. Required for positioning of the mitotic spindle. This Caenorhabditis elegans protein is Probable prefoldin subunit 6 (pfd-6).